A 492-amino-acid chain; its full sequence is 3-ketoacyl-CoA synthase 5 (492 aa).

2 consecutive transmembrane segments (helical) span residues 20–40 (LINN…AIEL) and 59–79 (LLHI…YFMS). The 290-residue stretch at 76–365 (YFMSKPRTVY…FLSSLIGRKI (290 aa)) folds into the FAE domain. Active-site residues include Cys220, His299, His383, His387, His416, and Asn420.

It belongs to the thiolase-like superfamily. Chalcone/stilbene synthases family. In terms of tissue distribution, expressed in siliques, flowers, leaves and seedlings.

Its subcellular location is the membrane. The catalysed reaction is a very-long-chain acyl-CoA + malonyl-CoA + H(+) = a very-long-chain 3-oxoacyl-CoA + CO2 + CoA. The protein operates within lipid metabolism; fatty acid biosynthesis. With respect to regulation, inhibited by K3 herbicides such as alachlor, allidochlor, anilofos, cafenstrole and flufenacet. Strongly inhibited by metazachlor and mefluidide. Its function is as follows. Mediates mostly the synthesis of VLCFAs from 26 to 30 carbons in length (e.g. C20:1, C26, C28, C30). The chain is 3-ketoacyl-CoA synthase 5 from Arabidopsis thaliana (Mouse-ear cress).